A 307-amino-acid polypeptide reads, in one-letter code: MEPRIWLIAGPTASGKSALALRLAEASGAEIVNADSMQLYAGLRVLTAGPGPEETARAPHHLFGSVDPADGWSVGRWLRAASEVIADIRGRGRPVVVVGGTGLYFRALTQGLAEIPEVPADVRAKAAADFERMGEAAFRTRLAEVDPAAAARIAPGDRQRLCRAWEVFAATGQALSDLQRTGAPAIADWSAVALEPPRPALYARCDARLHAMVREGALEEVRALIARNLDPALPAMKAVGVREFAAHLRGETSLEAAVEAAQQETRRYAKRQITWMRGQMAGWPRLTADDHEGQWRQFLAQEPGLTP.

10-17 contributes to the ATP binding site; it reads GPTASGKS. A substrate-binding site is contributed by 12–17; the sequence is TASGKS. Interaction with substrate tRNA stretches follow at residues 35–38 and 159–163; these read DSMQ and QRLCR.

Belongs to the IPP transferase family. Monomer. Mg(2+) is required as a cofactor.

The enzyme catalyses adenosine(37) in tRNA + dimethylallyl diphosphate = N(6)-dimethylallyladenosine(37) in tRNA + diphosphate. Functionally, catalyzes the transfer of a dimethylallyl group onto the adenine at position 37 in tRNAs that read codons beginning with uridine, leading to the formation of N6-(dimethylallyl)adenosine (i(6)A). The sequence is that of tRNA dimethylallyltransferase from Phenylobacterium zucineum (strain HLK1).